Consider the following 159-residue polypeptide: Growth arrest and DNA damage-inducible protein GADD45 gamma (159 aa).

Residues 43 to 86 form a homodimerization region; it reads VYESAKVLNVDPDNVTFCVLAAGEEDEGDIALQIHFTLIQAFCC.

Belongs to the GADD45 family. Undergoes concentration-dependent homodimerization, which is required for growth inhibititory activity and enhances interaction with PCNA. Interacts with GADD45GIP1. Interacts with PCNA.

Functionally, involved in the regulation of growth and apoptosis. Mediates activation of stress-responsive MTK1/MEKK4 MAPKKK. The chain is Growth arrest and DNA damage-inducible protein GADD45 gamma (GADD45G) from Homo sapiens (Human).